A 332-amino-acid polypeptide reads, in one-letter code: Fructose-1,6-bisphosphatase class 1 (332 aa).

Mg(2+) contacts are provided by E89, D110, L112, and D113. Substrate is bound by residues D113–S116, N206, Y239, Y257–Y259, and K269. E275 provides a ligand contact to Mg(2+).

Belongs to the FBPase class 1 family. As to quaternary structure, homotetramer. It depends on Mg(2+) as a cofactor.

The protein resides in the cytoplasm. It carries out the reaction beta-D-fructose 1,6-bisphosphate + H2O = beta-D-fructose 6-phosphate + phosphate. Its pathway is carbohydrate biosynthesis; gluconeogenesis. The polypeptide is Fructose-1,6-bisphosphatase class 1 (Salmonella typhi).